The sequence spans 251 residues: CDP-diacylglycerol pyrophosphatase (251 aa).

Residues Gly5 to Phe25 traverse the membrane as a helical segment.

This sequence belongs to the Cdh family.

It is found in the cell inner membrane. The catalysed reaction is a CDP-1,2-diacyl-sn-glycerol + H2O = a 1,2-diacyl-sn-glycero-3-phosphate + CMP + 2 H(+). The protein operates within phospholipid metabolism; CDP-diacylglycerol degradation; phosphatidate from CDP-diacylglycerol: step 1/1. This Salmonella enteritidis PT4 (strain P125109) protein is CDP-diacylglycerol pyrophosphatase.